The sequence spans 617 residues: Hemagglutinin glycoprotein (617 aa).

Over 1-37 the chain is Intravirion; sequence MSPQRDRINAFYKDNPHPKGSRIVINREHLMIDRPYV. The segment at 1 to 154 is stalk; the sequence is MSPQRDRINA…RIKLDYDQYC (154 aa). The chain crosses the membrane as a helical; Signal-anchor for type II membrane protein span at residues 38–58; that stretch reads LLAVLFVMFLSLIGLLAIAGI. Over 59–617 the chain is Virion surface; sequence RLHRAAIYTA…VTREDGTNRR (559 aa). 5 N-linked (GlcNAc...) asparagine; by host glycosylation sites follow: N168, N187, N200, N215, and N238. Disulfide bonds link C188-C606, C287-C300, C381-C494, C386-C394, and C570-C579. Positions 458–543 are interaction with host NECTIN4 receptor; it reads PMKNLALGVI…VEHAVVYYVY (86 aa).

This sequence belongs to the paramyxoviruses hemagglutinin-neuraminidase family. Non-sialidase subfamily. In terms of assembly, homodimer; disulfide-linked. Further forms homotetramer (dimer of dimers). Interacts (via C-terminus) with human NECTIN4 (via N-terminus); this interaction allows attachment to the respiratory epithelium and viral entry. Interacts (via C-terminus) with human SLAMF1/CD150 (via N-terminus); this interaction allows attachment and viral entry into the CD150-expressing immune cells. Interacts with human CD46 antigen (via N-terminus); this interaction allows attachment and viral entry of vaccine and laboratory-adapted strains.

Its subcellular location is the virion membrane. It is found in the host cell membrane. Attaches the virus to the human SLAMF1/CD150 receptor for entry into host dendritic cells, macrophages, activated memory T cells and naive or memory B cells, thereby explaining the long immunosuppression that follows infection. In the respiratory airways, binds to the NECTIN4 receptor for entry into the host cell. Binding of H protein to the receptor induces a conformational change that allows the F protein to trigger virion/cell membranes fusion. The vaccine and laboratory-adapted strains use host CD46 as an alternate receptor. The high degree of interaction between H and CD46 results in down-regulation of the latter from the surface of infected cells, rendering them more sensitive to c3b-mediated complement lysis. The chain is Hemagglutinin glycoprotein (H) from Measles virus (strain Edmonston) (MeV).